The chain runs to 180 residues: tRNA (cytidine(56)-2'-O)-methyltransferase (180 aa).

Residues leucine 84 and 112–116 (GAEKV) contribute to the S-adenosyl-L-methionine site.

The protein belongs to the aTrm56 family. Homodimer.

It localises to the cytoplasm. The enzyme catalyses cytidine(56) in tRNA + S-adenosyl-L-methionine = 2'-O-methylcytidine(56) in tRNA + S-adenosyl-L-homocysteine + H(+). Its function is as follows. Specifically catalyzes the AdoMet-dependent 2'-O-ribose methylation of cytidine at position 56 in tRNAs. The polypeptide is tRNA (cytidine(56)-2'-O)-methyltransferase (Haloarcula marismortui (strain ATCC 43049 / DSM 3752 / JCM 8966 / VKM B-1809) (Halobacterium marismortui)).